A 57-amino-acid polypeptide reads, in one-letter code: Large ribosomal subunit protein bL32 (57 aa).

Residues 1-23 (MAVPKKKTSKSKRDKRRATWRHK) are disordered.

It belongs to the bacterial ribosomal protein bL32 family.

This Trichormus variabilis (strain ATCC 29413 / PCC 7937) (Anabaena variabilis) protein is Large ribosomal subunit protein bL32.